The sequence spans 516 residues: Putative transposase y4bL/y4kJ/y4tB (516 aa).

Residues 15–96 form the HTH IS408-type domain; it reads IRTILRLTHE…PDWALVVREL (82 aa). One can recognise an Integrase catalytic domain in the interval 138 to 319; that stretch reads FRNRHAAGAV…SRRELFEEIE (182 aa). Residues 493–516 are disordered; the sequence is ERPQAEHAAPTPAHTNIRGRSYYQ.

This sequence belongs to the transposase IS21/IS408/IS1162 family.

This chain is Putative transposase y4bL/y4kJ/y4tB, found in Sinorhizobium fredii (strain NBRC 101917 / NGR234).